Here is a 107-residue protein sequence, read N- to C-terminus: MSATPQVSDASFKEDVLDSELPVLVDFWAPWCGPCRMVAPVVDEISQQYEGKVKVVKLNTDENPNTASQYGIRSIPTLMIFKGGQRVDMVVGAVPKTTLASTLEKYL.

The Thioredoxin domain occupies 2 to 107; sequence SATPQVSDAS…TLASTLEKYL (106 aa). A disulfide bridge connects residues cysteine 32 and cysteine 35.

It belongs to the thioredoxin family.

Its function is as follows. Component of the thioredoxin-thioredoxin reductase system. Participates in various redox reactions through the reversible oxidation of its active center dithiol to a disulfide and catalyzes dithiol-disulfide exchange reactions. This chain is Thioredoxin (trxA), found in Synechocystis sp. (strain ATCC 27184 / PCC 6803 / Kazusa).